The sequence spans 281 residues: Putative pyruvate, phosphate dikinase regulatory protein (281 aa).

Position 150–157 (150–157) interacts with ADP; that stretch reads GVSRTSKT.

The protein belongs to the pyruvate, phosphate/water dikinase regulatory protein family. PDRP subfamily.

It carries out the reaction N(tele)-phospho-L-histidyl/L-threonyl-[pyruvate, phosphate dikinase] + ADP = N(tele)-phospho-L-histidyl/O-phospho-L-threonyl-[pyruvate, phosphate dikinase] + AMP + H(+). The enzyme catalyses N(tele)-phospho-L-histidyl/O-phospho-L-threonyl-[pyruvate, phosphate dikinase] + phosphate + H(+) = N(tele)-phospho-L-histidyl/L-threonyl-[pyruvate, phosphate dikinase] + diphosphate. In terms of biological role, bifunctional serine/threonine kinase and phosphorylase involved in the regulation of the pyruvate, phosphate dikinase (PPDK) by catalyzing its phosphorylation/dephosphorylation. This is Putative pyruvate, phosphate dikinase regulatory protein from Sorangium cellulosum (strain So ce56) (Polyangium cellulosum (strain So ce56)).